The following is a 572-amino-acid chain: Hemagglutinin-neuraminidase (572 aa).

The Intravirion portion of the chain corresponds to 1 to 31 (MEYWKHTNHGKDAGNELETSMATHGNKLTNK). A helical membrane pass occupies residues 32–52 (IIYILWTIILVLLSIVFIIVL). At 53–572 (INSIKSEKAH…FKTEIPKSCS (520 aa)) the chain is on the virion surface side. 2 cysteine pairs are disulfide-bonded: Cys190/Cys214 and Cys256/Cys269. Residues 252-257 (NRKSCS) form an involved in neuraminidase activity region. N-linked (GlcNAc...) asparagine; by host glycans are attached at residues Asn308 and Asn351. Cystine bridges form between Cys355–Cys469 and Cys463–Cys473. The N-linked (GlcNAc...) asparagine; by host glycan is linked to Asn523. The cysteines at positions 535 and 544 are disulfide-linked.

This sequence belongs to the paramyxoviruses hemagglutinin-neuraminidase family. In terms of assembly, homotetramer; composed of disulfide-linked homodimers. Interacts with F protein trimer.

It is found in the virion membrane. Its subcellular location is the host cell membrane. It carries out the reaction Hydrolysis of alpha-(2-&gt;3)-, alpha-(2-&gt;6)-, alpha-(2-&gt;8)- glycosidic linkages of terminal sialic acid residues in oligosaccharides, glycoproteins, glycolipids, colominic acid and synthetic substrates.. In terms of biological role, attaches the virus to sialic acid-containing cell receptors and thereby initiating infection. Binding of HN protein to the receptor induces a conformational change that allows the F protein to trigger virion/cell membranes fusion. Functionally, neuraminidase activity ensures the efficient spread of the virus by dissociating the mature virions from the neuraminic acid containing glycoproteins. This Homo sapiens (Human) protein is Hemagglutinin-neuraminidase (HN).